Here is a 270-residue protein sequence, read N- to C-terminus: A-type potassium channel modulatory protein KCNIP2 (270 aa).

Positions 1-17 (MRGQGRKESLSDSRDLD) are enriched in basic and acidic residues. Positions 1–32 (MRGQGRKESLSDSRDLDGSYDQLTGHPPGPTK) are disordered. Phosphoserine is present on Ser9. S-palmitoyl cysteine attachment occurs at residues Cys45 and Cys46. The 57-residue stretch at 81 to 137 (FELSTVCHRPEGLEQLQEQTKFTRKELQVLYRGFKNECPSGIVNEENFKQIYSQFFP) folds into the EF-hand 1; degenerate domain. EF-hand domains follow at residues 140–175 (DSST…ILRG), 176–211 (TVDD…IYDM), and 224–259 (APRE…DENI). Asp153, Asn155, Asp157, Ser159, Asp164, Asp189, Asn191, Asp193, Cys195, Glu200, Asp237, Asn239, Asp241, and Glu248 together coordinate Ca(2+). The tract at residues 257-270 (ENIMRSMQLFDNVI) is interaction with KCND2.

It belongs to the recoverin family. In terms of assembly, component of heteromultimeric potassium channels. Identified in potassium channel complexes containing KCND1, KCND2, KCND3, KCNIP1, KCNIP2, KCNIP3, KCNIP4, DPP6 and DPP10. The KCND2-KCNIP2 channel complex contains four KCND2 and four KCNIP2 subunits. Interacts with KCND2. Probably part of a complex consisting of KCNIP1, KCNIP2 isoform 3 and KCND2. At least isoform 2 and isoform 3 can self-associate to form homodimers and homotetramers. Isoform 3 interacts with KCNIP1 in a calcium-dependent manner. Interacts with KCND3; each KCNIP2 monomer interacts with two adjacent KCND3 subunits, through both the N-terminal inactivation ball of a KCND3 subunit and a C-terminal helix from the adjacent KCND3 subunit, clamping them together; this interaction modulates the channel gating kinetics. Palmitoylated. Palmitoylation enhances association with the plasma membrane. In terms of tissue distribution, expressed in brain. Colocalizes with KCND2 in excitatory neurons including cortical and hippocampal CA1 pyramidal cells. Isoform 3 is expressed in heart and in umbilical vein endothelial cells. Not expressed in fetal heart.

Its subcellular location is the cell membrane. In terms of biological role, regulatory subunit of Kv4/D (Shal)-type voltage-gated rapidly inactivating A-type potassium channels. Modulates channel density, inactivation kinetics and rate of recovery from inactivation in a calcium-dependent and isoform-specific manner. Involved in KCND2 and KCND3 trafficking to the cell surface. May be required for the expression of I(To) currents in the heart. This chain is A-type potassium channel modulatory protein KCNIP2, found in Homo sapiens (Human).